Here is a 107-residue protein sequence, read N- to C-terminus: Ig kappa chain V-VI region NQ5-78.2.6 (107 aa).

The interval 1-23 (QILLTQSPAIMSASPGQKVTMTC) is framework-1. A disulfide bond links cysteine 23 and cysteine 87. The interval 24–33 (SASSSVSYMH) is complementarity-determining-1. A framework-2 region spans residues 34 to 48 (WYQQKSGTSPKRWIY). The segment at 49 to 55 (DTSKLAS) is complementarity-determining-2. Residues 56 to 87 (GVPARFXGSGSATSYSLTITSMQAEDAATYYC) are framework-3. Residues 88–96 (QQWSSNPLT) are complementarity-determining-3. The segment at 97–106 (FGSGTKLEXK) is framework-4.

Anti-2-phenyl oxazolone (PHOX) Antibody. The polypeptide is Ig kappa chain V-VI region NQ5-78.2.6 (Mus musculus (Mouse)).